Here is a 610-residue protein sequence, read N- to C-terminus: UvrABC system protein C (610 aa).

In terms of domain architecture, GIY-YIG spans 16 to 94 (SAPGVYRMYD…IKQYMPKYNV (79 aa)). In terms of domain architecture, UVR spans 203–238 (KQVISQLVAKMETAAIDMEYERAAQYRDQITALRRV).

It belongs to the UvrC family. In terms of assembly, interacts with UvrB in an incision complex.

It localises to the cytoplasm. In terms of biological role, the UvrABC repair system catalyzes the recognition and processing of DNA lesions. UvrC both incises the 5' and 3' sides of the lesion. The N-terminal half is responsible for the 3' incision and the C-terminal half is responsible for the 5' incision. The chain is UvrABC system protein C from Shewanella frigidimarina (strain NCIMB 400).